We begin with the raw amino-acid sequence, 778 residues long: Phosphoribosylformylglycinamidine synthase subunit PurL (778 aa).

Histidine 44 is an active-site residue. Residues tyrosine 47 and lysine 86 each contribute to the ATP site. Glutamate 88 serves as a coordination point for Mg(2+). Residues serine 89–histidine 92 and arginine 111 each bind substrate. Histidine 90 acts as the Proton acceptor in catalysis. 2 residues coordinate Mg(2+): aspartate 112 and aspartate 265. Residue glutamate 309 to glutamine 311 coordinates substrate. Residues threonine 455–lysine 474 form a disordered region. Asparagine 518 and glycine 555 together coordinate ATP. Asparagine 556 is a Mg(2+) binding site. Position 558 (serine 558) interacts with substrate.

It belongs to the FGAMS family. In terms of assembly, monomer. Part of the FGAM synthase complex composed of 1 PurL, 1 PurQ and 2 PurS subunits.

It is found in the cytoplasm. It catalyses the reaction N(2)-formyl-N(1)-(5-phospho-beta-D-ribosyl)glycinamide + L-glutamine + ATP + H2O = 2-formamido-N(1)-(5-O-phospho-beta-D-ribosyl)acetamidine + L-glutamate + ADP + phosphate + H(+). The protein operates within purine metabolism; IMP biosynthesis via de novo pathway; 5-amino-1-(5-phospho-D-ribosyl)imidazole from N(2)-formyl-N(1)-(5-phospho-D-ribosyl)glycinamide: step 1/2. Its function is as follows. Part of the phosphoribosylformylglycinamidine synthase complex involved in the purines biosynthetic pathway. Catalyzes the ATP-dependent conversion of formylglycinamide ribonucleotide (FGAR) and glutamine to yield formylglycinamidine ribonucleotide (FGAM) and glutamate. The FGAM synthase complex is composed of three subunits. PurQ produces an ammonia molecule by converting glutamine to glutamate. PurL transfers the ammonia molecule to FGAR to form FGAM in an ATP-dependent manner. PurS interacts with PurQ and PurL and is thought to assist in the transfer of the ammonia molecule from PurQ to PurL. This is Phosphoribosylformylglycinamidine synthase subunit PurL from Symbiobacterium thermophilum (strain DSM 24528 / JCM 14929 / IAM 14863 / T).